Reading from the N-terminus, the 321-residue chain is Lipoyl synthase (321 aa).

The [4Fe-4S] cluster site is built by cysteine 68, cysteine 73, cysteine 79, cysteine 94, cysteine 98, cysteine 101, and serine 308. A Radical SAM core domain is found at 80-297 (FNHGTATFMI…KAEALAMGFT (218 aa)).

The protein belongs to the radical SAM superfamily. Lipoyl synthase family. [4Fe-4S] cluster serves as cofactor.

It localises to the cytoplasm. The catalysed reaction is [[Fe-S] cluster scaffold protein carrying a second [4Fe-4S](2+) cluster] + N(6)-octanoyl-L-lysyl-[protein] + 2 oxidized [2Fe-2S]-[ferredoxin] + 2 S-adenosyl-L-methionine + 4 H(+) = [[Fe-S] cluster scaffold protein] + N(6)-[(R)-dihydrolipoyl]-L-lysyl-[protein] + 4 Fe(3+) + 2 hydrogen sulfide + 2 5'-deoxyadenosine + 2 L-methionine + 2 reduced [2Fe-2S]-[ferredoxin]. It functions in the pathway protein modification; protein lipoylation via endogenous pathway; protein N(6)-(lipoyl)lysine from octanoyl-[acyl-carrier-protein]: step 2/2. Its function is as follows. Catalyzes the radical-mediated insertion of two sulfur atoms into the C-6 and C-8 positions of the octanoyl moiety bound to the lipoyl domains of lipoate-dependent enzymes, thereby converting the octanoylated domains into lipoylated derivatives. This Salmonella typhi protein is Lipoyl synthase.